Consider the following 421-residue polypeptide: Putative transporter AmpG 3 (421 aa).

The next 12 membrane-spanning stretches (helical) occupy residues 6-26, 41-61, 80-100, 104-124, 139-159, 166-186, 230-250, 274-294, 297-317, 324-344, 360-380, and 388-408; these read YLIGILLLGLISGLTFNLIFF, IIGAISLAAFPYCLKVIWSPF, WALVSQIFLILAMMWFLKRSP, LCITAIILFIIAFFSSTQDIV, LSIVFTFSSIGFRLGMLLGSV, IIFGWNTVYKFALFITMVGPI, LLLIILFVFLYKAADSIPMAM, LLIMIVGGTLGGILAAKIGIF, VLIGGVIQLLSPLMFMILATI, FIITITIQNFCSGFAGTIISI, AISASFSSLSRIILASLGGIC, and VFFLCNTLFSMLFIPIFYTIY.

It belongs to the major facilitator superfamily.

The protein resides in the cell inner membrane. In Rickettsia prowazekii (strain Madrid E), this protein is Putative transporter AmpG 3 (ampG3).